Consider the following 141-residue polypeptide: Putative RING-H2 finger protein ATL62 (141 aa).

Residues 14-32 form a helical membrane-spanning segment; that stretch reads FFAILTVFYSIFRCCLAYC. Residues 79–121 form an RING-type; degenerate zinc finger; that stretch reads CVVCLSKFIDEDKARVLPSCNHCFHFDFTDTWLHSDYTCPNCR.

This sequence belongs to the RING-type zinc finger family. ATL subfamily.

The protein resides in the membrane. The enzyme catalyses S-ubiquitinyl-[E2 ubiquitin-conjugating enzyme]-L-cysteine + [acceptor protein]-L-lysine = [E2 ubiquitin-conjugating enzyme]-L-cysteine + N(6)-ubiquitinyl-[acceptor protein]-L-lysine.. Its pathway is protein modification; protein ubiquitination. In Arabidopsis thaliana (Mouse-ear cress), this protein is Putative RING-H2 finger protein ATL62 (ATL62).